We begin with the raw amino-acid sequence, 187 residues long: V-type ATP synthase subunit E (187 aa).

This sequence belongs to the V-ATPase E subunit family.

Functionally, produces ATP from ADP in the presence of a proton gradient across the membrane. The chain is V-type ATP synthase subunit E from Geotalea uraniireducens (strain Rf4) (Geobacter uraniireducens).